A 694-amino-acid polypeptide reads, in one-letter code: ATP-binding cassette sub-family G member 8 (694 aa).

Topologically, residues 1 to 437 are cytoplasmic; the sequence is MAEKTKEETQ…ISNDFRDLPT (437 aa). One can recognise an ABC transporter domain in the interval 91 to 335; it reads AQFKLPWRSR…FTSIGYPCPR (245 aa). Positions 436–684 constitute an ABC transmembrane type-2 domain; the sequence is PTLFIHGAEA…FLSLYYLSLK (249 aa). Residues 438–458 form a helical membrane-spanning segment; the sequence is LFIHGAEACLMSLIIGFLYYG. Over 459 to 468 the chain is Extracellular; the sequence is HADKPLSFMD. Residues 469–489 traverse the membrane as a helical segment; sequence MAALLFMIGALIPFNVILDVV. Over 490 to 518 the chain is Cytoplasmic; sequence SKCHSERSLLYYELEDGLYTAGPYFFAKV. Residues 519 to 539 traverse the membrane as a helical segment; it reads LGELPEHCAYVIIYGMPIYWL. Topologically, residues 540–548 are extracellular; it reads TNLRPGPEL. A helical transmembrane segment spans residues 549 to 569; the sequence is FLLHFMLLWLVVFCCRTMALA. The Cytoplasmic segment spans residues 570-576; it reads ASAMLPT. The chain crosses the membrane as a helical span at residues 577 to 597; that stretch reads FHMSSFCCNALYNSFYLTAGF. Residues 598–660 lie on the Extracellular side of the membrane; sequence MINLNNLWIV…VTAMDLNSHP (63 aa). Asparagine 640 carries an N-linked (GlcNAc...) asparagine glycan. Residues 661-681 form a helical membrane-spanning segment; it reads LYAIYLIVIGISCGFLSLYYL. Topologically, residues 682–694 are cytoplasmic; sequence SLKFIKQKSIQDW.

It belongs to the ABC transporter superfamily. ABCG family. Eye pigment precursor importer (TC 3.A.1.204) subfamily. Heterodimer with ABCG8. It depends on Mg(2+) as a cofactor. In terms of processing, N-glycosylated. N-glycosylation is important for efficient export out of the endoplasmic reticulum. In terms of tissue distribution, highest expression in liver, with lower levels in small intestine and colon.

It is found in the cell membrane. The protein resides in the apical cell membrane. It carries out the reaction cholesterol(in) + ATP + H2O = cholesterol(out) + ADP + phosphate + H(+). The catalysed reaction is sitosterol(in) + ATP + H2O = sitosterol(out) + ADP + phosphate + H(+). Its function is as follows. ABCG5 and ABCG8 form an obligate heterodimer that mediates Mg(2+)- and ATP-dependent sterol transport across the cell membrane. Plays an essential role in the selective transport of the dietary cholesterol in and out of the enterocytes and in the selective sterol excretion by the liver into bile. Required for normal sterol homeostasis. The heterodimer with ABCG5 has ATPase activity. This is ATP-binding cassette sub-family G member 8 from Rattus norvegicus (Rat).